The following is a 389-amino-acid chain: Na(+)/H(+) antiporter NhaA (389 aa).

Helical transmembrane passes span 14 to 34 (AGGI…NSPL), 59 to 79 (LLLW…GLEV), 95 to 115 (SLPS…YLLF), 124 to 144 (AGWA…MALL), 154 to 174 (VFLL…IALF), 177 to 197 (SDLS…LVGL), 213 to 233 (LILW…GVII), 261 to 281 (FLIL…NMSL), 290 to 310 (IGIA…FSFI), 328 to 348 (IAPV…IASL), and 363 to 383 (LGTL…LSKV).

This sequence belongs to the NhaA Na(+)/H(+) (TC 2.A.33) antiporter family.

The protein resides in the cell inner membrane. It carries out the reaction Na(+)(in) + 2 H(+)(out) = Na(+)(out) + 2 H(+)(in). Its function is as follows. Na(+)/H(+) antiporter that extrudes sodium in exchange for external protons. This is Na(+)/H(+) antiporter NhaA from Shewanella sp. (strain W3-18-1).